A 166-amino-acid chain; its full sequence is Putative 4-hydroxy-4-methyl-2-oxoglutarate aldolase (166 aa).

Substrate contacts are provided by residues 74–77 (GDQI) and Arg-96. Residue Asp-97 participates in a divalent metal cation binding.

This sequence belongs to the class II aldolase/RraA-like family. As to quaternary structure, homotrimer. It depends on a divalent metal cation as a cofactor.

It carries out the reaction 4-hydroxy-4-methyl-2-oxoglutarate = 2 pyruvate. It catalyses the reaction oxaloacetate + H(+) = pyruvate + CO2. In terms of biological role, catalyzes the aldol cleavage of 4-hydroxy-4-methyl-2-oxoglutarate (HMG) into 2 molecules of pyruvate. Also contains a secondary oxaloacetate (OAA) decarboxylase activity due to the common pyruvate enolate transition state formed following C-C bond cleavage in the retro-aldol and decarboxylation reactions. This is Putative 4-hydroxy-4-methyl-2-oxoglutarate aldolase from Xanthomonas campestris pv. campestris (strain B100).